The primary structure comprises 182 residues: Signal peptidase I (182 aa).

The Cytoplasmic portion of the chain corresponds to 1–13 (MTKQKEKRGRRWP). A helical transmembrane segment spans residues 14–30 (WFVAVCVVATLRLFVFS). At 31–182 (NYVVEGKSMM…WPFKQFAFQF (152 aa)) the chain is on the extracellular side. Residues Ser38 and Lys79 contribute to the active site.

Belongs to the peptidase S26 family.

Its subcellular location is the cell membrane. It catalyses the reaction Cleavage of hydrophobic, N-terminal signal or leader sequences from secreted and periplasmic proteins.. This Bacillus caldolyticus protein is Signal peptidase I (lepB).